Reading from the N-terminus, the 791-residue chain is Vezatin (791 aa).

The next 2 helical transmembrane spans lie at 138–158 (IATP…ALAA) and 163–183 (SISS…FTVL). Residues 435-464 (VRSLQLHLKALLNEVIILEDELEKLSSCKE) adopt a coiled-coil conformation. Residues 752 to 769 (GDEWDDDDDDNDNDDDNY) are compositionally biased toward acidic residues. The segment at 752-791 (GDEWDDDDDDNDNDDDNYDQVKNVESHEKERNNVSLQLEE) is disordered. Basic and acidic residues predominate over residues 773-783 (KNVESHEKERN).

It belongs to the vezatin family. As to quaternary structure, interacts with myosin VIIa and the cadherin-catenins complex.

The protein localises to the cell membrane. It localises to the cell junction. It is found in the adherens junction. Its subcellular location is the nucleus. Its function is as follows. Plays a pivotal role in the establishment of adherens junctions and their maintenance in adult life. This chain is Vezatin (vezt), found in Xenopus tropicalis (Western clawed frog).